A 104-amino-acid chain; its full sequence is L-rhamnose mutarotase (104 aa).

Residue Y18 coordinates substrate. The active-site Proton donor is H22. Residues Y41 and W76–W77 each bind substrate.

It belongs to the rhamnose mutarotase family. Homodimer.

The protein localises to the cytoplasm. The catalysed reaction is alpha-L-rhamnose = beta-L-rhamnose. It functions in the pathway carbohydrate metabolism; L-rhamnose metabolism. In terms of biological role, involved in the anomeric conversion of L-rhamnose. This chain is L-rhamnose mutarotase, found in Oceanobacillus iheyensis (strain DSM 14371 / CIP 107618 / JCM 11309 / KCTC 3954 / HTE831).